A 90-amino-acid polypeptide reads, in one-letter code: Probable Fe(2+)-trafficking protein (90 aa).

This sequence belongs to the Fe(2+)-trafficking protein family.

Functionally, could be a mediator in iron transactions between iron acquisition and iron-requiring processes, such as synthesis and/or repair of Fe-S clusters in biosynthetic enzymes. This Saccharophagus degradans (strain 2-40 / ATCC 43961 / DSM 17024) protein is Probable Fe(2+)-trafficking protein.